Consider the following 106-residue polypeptide: Protein translocase subunit SecE (106 aa).

2 helical membrane passes run 20–40 (LPIR…LAAI) and 75–95 (IVIG…SIIV).

It belongs to the SecE/SEC61-gamma family. Component of the Sec protein translocase complex. Heterotrimer consisting of SecY, SecE and SecG subunits. The heterotrimers can form oligomers, although 1 heterotrimer is thought to be able to translocate proteins. Interacts with the ribosome. Interacts with SecDF, and other proteins may be involved. Interacts with SecA.

It is found in the cell inner membrane. Functionally, essential subunit of the Sec protein translocation channel SecYEG. Clamps together the 2 halves of SecY. May contact the channel plug during translocation. The sequence is that of Protein translocase subunit SecE from Haemophilus influenzae (strain ATCC 51907 / DSM 11121 / KW20 / Rd).